Here is a 166-residue protein sequence, read N- to C-terminus: Putative transmembrane protein ORF166 (166 aa).

Helical transmembrane passes span 35–55 (IILV…FAGL), 60–80 (PICV…FVTA), and 124–144 (IFCL…AFIN).

The protein resides in the host membrane. The protein is Putative transmembrane protein ORF166 of Acidianus convivator (ABV).